The chain runs to 503 residues: Na(+)-translocating NADH-quinone reductase subunit B (503 aa).

The next 5 membrane-spanning stretches (helical) occupy residues 55 to 75 (MMLVVIALFPATFLAIWNSGV), 94 to 114 (ISGFRSYLSFIFNDIGVFSIL), 120 to 140 (IFLPLLIISYSVGGVCEVLFA), 161 to 181 (TLPPTIPYWMAALGIAFGVVV), and 186 to 206 (FGGTGMNILNPALSGRAFLFF). Threonine 248 is subject to FMN phosphoryl threonine. Helical transmembrane passes span 361-381 (TSTFACLLGAIFLVVTGIASW), 387-407 (FGIGAFITAWLFKIFSILIVG), 417-437 (FFIPAYRQLFLGGLGFGLVFM), 452-472 (WIYGLFIGFMTIVIRLINPAY), and 475-495 (GVMLAILLGNVFAPLLDYFAV).

The protein belongs to the NqrB/RnfD family. As to quaternary structure, composed of six subunits; NqrA, NqrB, NqrC, NqrD, NqrE and NqrF. FMN serves as cofactor.

The protein localises to the cell inner membrane. It catalyses the reaction a ubiquinone + n Na(+)(in) + NADH + H(+) = a ubiquinol + n Na(+)(out) + NAD(+). Its function is as follows. NQR complex catalyzes the reduction of ubiquinone-1 to ubiquinol by two successive reactions, coupled with the transport of Na(+) ions from the cytoplasm to the periplasm. NqrA to NqrE are probably involved in the second step, the conversion of ubisemiquinone to ubiquinol. The protein is Na(+)-translocating NADH-quinone reductase subunit B of Chlamydia caviae (strain ATCC VR-813 / DSM 19441 / 03DC25 / GPIC) (Chlamydophila caviae).